Here is a 362-residue protein sequence, read N- to C-terminus: 3-dehydroquinate synthase (362 aa).

Residues 70–75, 104–108, 128–129, K141, K150, and 168–171 each bind NAD(+); these read DGEKYK, GVIGD, TT, and TLNT. E183, H246, and H263 together coordinate Zn(2+).

Belongs to the sugar phosphate cyclases superfamily. Dehydroquinate synthase family. NAD(+) is required as a cofactor. It depends on Co(2+) as a cofactor. The cofactor is Zn(2+).

It localises to the cytoplasm. It catalyses the reaction 7-phospho-2-dehydro-3-deoxy-D-arabino-heptonate = 3-dehydroquinate + phosphate. It functions in the pathway metabolic intermediate biosynthesis; chorismate biosynthesis; chorismate from D-erythrose 4-phosphate and phosphoenolpyruvate: step 2/7. Catalyzes the conversion of 3-deoxy-D-arabino-heptulosonate 7-phosphate (DAHP) to dehydroquinate (DHQ). The sequence is that of 3-dehydroquinate synthase from Haemophilus influenzae (strain ATCC 51907 / DSM 11121 / KW20 / Rd).